The chain runs to 224 residues: MSVFGKLFGAGGGKAGKGGPTPQEAIQRLRDTEEMLSKKQEFLEKKIEQELTAAKKHGTKNKRAALQALKRKKRYEKQLAQIDGTLSTIEFQREALENANTNTEVLKNMGYAAKAMKAAHDNMDIDKVDELMQDIADQQELAEEISTAISKPVGFGEEFDEDELMAELEELEQEELDKNLLEISGPETVPLPNVPSVALPSKPAKKKEEEDDDMKELENWAGSM.

The segment at 1–23 (MSVFGKLFGAGGGKAGKGGPTPQ) is disordered. Residue Ser2 is modified to N-acetylserine. Residues 2–153 (SVFGKLFGAG…EISTAISKPV (152 aa)) are intramolecular interaction with C-terminus. Lys6 is subject to N6-acetyllysine. Over residues 8-19 (FGAGGGKAGKGG) the composition is skewed to gly residues. The stretch at 23 to 183 (QEAIQRLRDT…EELDKNLLEI (161 aa)) forms a coiled coil. N6-acetyllysine is present on Lys114. An intramolecular interaction with N-terminus region spans residues 154-224 (GFGEEFDEDE…KELENWAGSM (71 aa)). Residues Ser184 and Ser223 each carry the phosphoserine modification. A disordered region spans residues 185–224 (GPETVPLPNVPSVALPSKPAKKKEEEDDDMKELENWAGSM).

This sequence belongs to the SNF7 family. As to quaternary structure, probable core component of the endosomal sorting required for transport complex III (ESCRT-III). ESCRT-III components are thought to multimerize to form a flat lattice on the perimeter membrane of the endosome. Several assembly forms of ESCRT-III may exist that interact and act sequentially. Interacts with CHMP6 and CHMP4C. Interacts with PDCD6IP; the interaction is direct. Interacts with VPS4A; the interaction is direct. Interacts with VPS4B; the interaction is direct. Interacts with CHMP7. Interacts with CFTR; the interaction requires misfolded CFTR. Interacts with PTPN23. Interacts with CC2D1B. Post-translationally, ISGylated. Isgylation weakens its interaction with VPS4A.

The protein localises to the cytoplasm. Its subcellular location is the cytosol. The protein resides in the late endosome membrane. It is found in the midbody. It localises to the nucleus envelope. Functionally, probable core component of the endosomal sorting required for transport complex III (ESCRT-III) which is involved in multivesicular bodies (MVBs) formation and sorting of endosomal cargo proteins into MVBs. MVBs contain intraluminal vesicles (ILVs) that are generated by invagination and scission from the limiting membrane of the endosome and mostly are delivered to lysosomes enabling degradation of membrane proteins, such as stimulated growth factor receptors, lysosomal enzymes and lipids. The MVB pathway appears to require the sequential function of ESCRT-O, -I,-II and -III complexes. ESCRT-III proteins mostly dissociate from the invaginating membrane before the ILV is released. The ESCRT machinery also functions in topologically equivalent membrane fission events, such as the terminal stages of cytokinesis. Together with SPAST, the ESCRT-III complex promotes nuclear envelope sealing and mitotic spindle disassembly during late anaphase. Plays a role in the endosomal sorting pathway. ESCRT-III proteins are believed to mediate the necessary vesicle extrusion and/or membrane fission activities, possibly in conjunction with the AAA ATPase VPS4. When overexpressed, membrane-assembled circular arrays of CHMP4B filaments can promote or stabilize negative curvature and outward budding. CHMP4A/B/C are required for the exosomal release of SDCBP, CD63 and syndecan. Majority of the protein exists in a folded closed conformation. The polypeptide is Charged multivesicular body protein 4b (Chmp4b) (Mus musculus (Mouse)).